A 621-amino-acid chain; its full sequence is UvrABC system protein C (621 aa).

The 79-residue stretch at 20–98 folds into the GIY-YIG domain; that stretch reads TAPGVYRMYA…IKSLTPRYNV (79 aa). The UVR domain occupies 207–242; the sequence is DLLAEELIQAMQVASEHLEFEQAARLRDLLTSLRSM.

Belongs to the UvrC family. In terms of assembly, interacts with UvrB in an incision complex.

It is found in the cytoplasm. In terms of biological role, the UvrABC repair system catalyzes the recognition and processing of DNA lesions. UvrC both incises the 5' and 3' sides of the lesion. The N-terminal half is responsible for the 3' incision and the C-terminal half is responsible for the 5' incision. This is UvrABC system protein C from Xylella fastidiosa (strain Temecula1 / ATCC 700964).